The following is a 298-amino-acid chain: MATKEEHVRKPDWLKIKLNTNEHYTGLKKLMRENRLHTVCEEAKCPNIHECWAVRRTATFMILGSVCTRACRFCAVKTGLPTELDWQEPERVAESVRIMNLKHVVVTAVARDDLKDGGAAVFAETVRAIRRKNPFTTIEVLPSDMGGVYENLKTLMDARPDILNHNIETVRRLTPRVRARATYERSLEFLRRAKELQPDIPTKSSIMIGLGETKEEIIEAMDDLRANHVDILTIGQYLQPTKKHLKVVKYYHPDEFQELKEIALSKGFSHCEAGPLVRSSYHADEQVNEAAKARQLKA.

Positions 40, 45, 51, 67, 71, 74, and 280 each coordinate [4Fe-4S] cluster. Residues 53-269 enclose the Radical SAM core domain; the sequence is AVRRTATFMI…KEIALSKGFS (217 aa).

It belongs to the radical SAM superfamily. Lipoyl synthase family. The cofactor is [4Fe-4S] cluster.

Its subcellular location is the cytoplasm. It catalyses the reaction [[Fe-S] cluster scaffold protein carrying a second [4Fe-4S](2+) cluster] + N(6)-octanoyl-L-lysyl-[protein] + 2 oxidized [2Fe-2S]-[ferredoxin] + 2 S-adenosyl-L-methionine + 4 H(+) = [[Fe-S] cluster scaffold protein] + N(6)-[(R)-dihydrolipoyl]-L-lysyl-[protein] + 4 Fe(3+) + 2 hydrogen sulfide + 2 5'-deoxyadenosine + 2 L-methionine + 2 reduced [2Fe-2S]-[ferredoxin]. It participates in protein modification; protein lipoylation via endogenous pathway; protein N(6)-(lipoyl)lysine from octanoyl-[acyl-carrier-protein]. Functionally, catalyzes the radical-mediated insertion of two sulfur atoms into the C-6 and C-8 positions of the octanoyl moiety bound to the lipoyl domains of lipoate-dependent enzymes, thereby converting the octanoylated domains into lipoylated derivatives. The chain is Lipoyl synthase from Geobacillus thermodenitrificans (strain NG80-2).